Consider the following 209-residue polypeptide: uncharacterized protein (209 aa).

The region spanning 1–199 (MQVFLDLDET…DELKRVTASL (199 aa)) is the FCP1 homology domain.

This is an uncharacterized protein from Dryophytes versicolor (chameleon treefrog).